The sequence spans 55 residues: Hydrophobic protein LTI6B (55 aa).

2 helical membrane-spanning segments follow: residues 8-28 (IDILIAIILPPLGVFLKFGCG) and 31-51 (FWICLLLTFLGYIPGIIYAIY).

Belongs to the UPF0057 (PMP3) family.

The protein resides in the membrane. Plays a role in the regulation of membrane potential. Could mediate a proton leak. This is Hydrophobic protein LTI6B (LTI6B) from Oryza sativa subsp. indica (Rice).